We begin with the raw amino-acid sequence, 170 residues long: Protein SprT (170 aa).

The SprT-like domain maps to 22 to 165 (LQLANQHLGT…RQCGEKLQFI (144 aa)). A Zn(2+)-binding site is contributed by His78. Residue Glu79 is part of the active site. Position 82 (His82) interacts with Zn(2+).

The protein belongs to the SprT family. Zn(2+) is required as a cofactor.

The protein resides in the cytoplasm. The protein is Protein SprT of Yersinia pseudotuberculosis serotype O:1b (strain IP 31758).